The primary structure comprises 125 residues: Glycine cleavage system H protein (125 aa).

One can recognise a Lipoyl-binding domain in the interval 23-105 (VSTVGITEHA…FEGGWLFKVR (83 aa)). Lys64 carries the N6-lipoyllysine modification.

The protein belongs to the GcvH family. In terms of assembly, the glycine cleavage system is composed of four proteins: P, T, L and H. Requires (R)-lipoate as cofactor.

The glycine cleavage system catalyzes the degradation of glycine. The H protein shuttles the methylamine group of glycine from the P protein to the T protein. This is Glycine cleavage system H protein from Streptomyces coelicolor (strain ATCC BAA-471 / A3(2) / M145).